A 457-amino-acid polypeptide reads, in one-letter code: uncharacterized protein (457 aa).

Residues 10–69 enclose the TRAM domain; the sequence is ALLQGQTVTVPITALAAGGDGIARLTDGRVLFVAGAVPGDTVEARLVHLKKDHGFGKILQ. Cysteine 82, cysteine 88, cysteine 91, and cysteine 170 together coordinate [4Fe-4S] cluster. 4 residues coordinate S-adenosyl-L-methionine: glutamine 294, tyrosine 323, glutamate 344, and aspartate 387. The Nucleophile role is filled by cysteine 414.

Belongs to the class I-like SAM-binding methyltransferase superfamily. RNA M5U methyltransferase family.

This is an uncharacterized protein from Gloeobacter violaceus (strain ATCC 29082 / PCC 7421).